The primary structure comprises 264 residues: S-adenosylmethionine decarboxylase proenzyme (264 aa).

Serine 112 functions as the Schiff-base intermediate with substrate; via pyruvic acid in the catalytic mechanism. The residue at position 112 (serine 112) is a Pyruvic acid (Ser); by autocatalysis. Residue histidine 117 is the Proton acceptor; for processing activity of the active site. The Proton donor; for catalytic activity role is filled by cysteine 140.

It belongs to the prokaryotic AdoMetDC family. Type 2 subfamily. In terms of assembly, heterooctamer of four alpha and four beta chains arranged as a tetramer of alpha/beta heterodimers. The cofactor is pyruvate. Post-translationally, is synthesized initially as an inactive proenzyme. Formation of the active enzyme involves a self-maturation process in which the active site pyruvoyl group is generated from an internal serine residue via an autocatalytic post-translational modification. Two non-identical subunits are generated from the proenzyme in this reaction, and the pyruvate is formed at the N-terminus of the alpha chain, which is derived from the carboxyl end of the proenzyme. The post-translation cleavage follows an unusual pathway, termed non-hydrolytic serinolysis, in which the side chain hydroxyl group of the serine supplies its oxygen atom to form the C-terminus of the beta chain, while the remainder of the serine residue undergoes an oxidative deamination to produce ammonia and the pyruvoyl group blocking the N-terminus of the alpha chain.

It carries out the reaction S-adenosyl-L-methionine + H(+) = S-adenosyl 3-(methylsulfanyl)propylamine + CO2. It participates in amine and polyamine biosynthesis; S-adenosylmethioninamine biosynthesis; S-adenosylmethioninamine from S-adenosyl-L-methionine: step 1/1. In terms of biological role, catalyzes the decarboxylation of S-adenosylmethionine to S-adenosylmethioninamine (dcAdoMet), the propylamine donor required for the synthesis of the polyamines spermine and spermidine from the diamine putrescine. This chain is S-adenosylmethionine decarboxylase proenzyme, found in Escherichia coli O45:K1 (strain S88 / ExPEC).